The following is a 471-amino-acid chain: BRISC complex subunit FAM175B (471 aa).

The 155-residue stretch at 7 to 161 (LVTISGAALS…THKFRHVFLR (155 aa)) folds into the MPN domain. A coiled-coil region spans residues 245-272 (ESDLEVAELEKQVHELKIKIATQQLAKR). The disordered stretch occupies residues 343-445 (AEKSRRAGRS…FSDAECPISS (103 aa)). The span at 359-370 (NQQQETQNFFTN) shows a compositional bias: low complexity.

This sequence belongs to the FAM175 family. Abro1 subfamily. In terms of assembly, component of the BRISC complex, at least composed of FAM175B/ABRO1, BRCC3/BRCC36, BABAM2 and BABAM1/NBA1. Within the complex, interacts directly with BRCC3/BRCC36. The heterodimer with BRCC3/BRCC36 assembles into a heterotetramer. The BRISC complex binds polyubiquitin.

It is found in the cytoplasm. The protein localises to the nucleus. It localises to the cytoskeleton. The protein resides in the spindle pole. Its function is as follows. Component of the BRISC complex that specifically cleaves 'Lys-63'-linked polyubiquitin, leaving the last ubiquitin chain attached to its substrates. Does not have activity by itself, but the catalytic subunit BRCC3/BRCC36 needs to be associated into a heterotetramer with FAM175B for minimal in vitro activity. May act as a central scaffold protein that assembles the various components of the BRISC complex and retains them in the cytoplasm. Plays a role in regulating the onset of apoptosis via its role in modulating 'Lys-63'-linked ubiquitination of target proteins. Required for normal mitotic spindle assembly and microtubule attachment to kinetochores via its role in deubiquitinating numa1. In Camponotus floridanus (Florida carpenter ant), this protein is BRISC complex subunit FAM175B.